A 51-amino-acid polypeptide reads, in one-letter code: MGQKIRKCKNCGRYTLREICPVCGGKPFSPNPARFSPKDPYGRYRRMAKKG.

The protein belongs to the NOP10 family.

Functionally, involved in ribosome biogenesis; more specifically in 18S rRNA pseudouridylation and in cleavage of pre-rRNA. In Methanosarcina barkeri (strain Fusaro / DSM 804), this protein is Ribosome biogenesis protein Nop10.